The chain runs to 153 residues: DNA gyrase inhibitor 1 (153 aa).

Belongs to the DNA gyrase inhibitor family. Interacts with DNA gyrase.

The protein localises to the cytoplasm. In terms of biological role, inhibits the supercoiling activity of DNA gyrase. Acts by inhibiting DNA gyrase at an early step, prior to (or at the step of) binding of DNA by the gyrase. It protects cells against toxins that target DNA gyrase, by inhibiting activity of these toxins and reducing the formation of lethal double-strand breaks in the cell. The polypeptide is DNA gyrase inhibitor 1 (Dickeya dadantii (strain 3937) (Erwinia chrysanthemi (strain 3937))).